The sequence spans 264 residues: Probable amino-acid-binding protein YxeM (264 aa).

The N-terminal stretch at 1 to 20 (MKMKKWTVLVVAALLAVLSA) is a signal peptide. A lipid anchor (N-palmitoyl cysteine) is attached at Cys-21. Residue Cys-21 is the site of S-diacylglycerol cysteine attachment.

It belongs to the bacterial solute-binding protein 3 family. In terms of assembly, the complex is composed of two ATP-binding proteins (YxeO), two transmembrane proteins (YxeN) and a solute-binding protein (YxeM).

The protein resides in the cell membrane. It is found in the membrane raft. Probably part of the ABC transporter complex YxeMNO that could be involved in amino-acid import. May transport S-methylcysteine. The chain is Probable amino-acid-binding protein YxeM (yxeM) from Bacillus subtilis (strain 168).